We begin with the raw amino-acid sequence, 121 residues long: UPF0102 protein BHWA1_02005 (121 aa).

Belongs to the UPF0102 family.

In Brachyspira hyodysenteriae (strain ATCC 49526 / WA1), this protein is UPF0102 protein BHWA1_02005.